We begin with the raw amino-acid sequence, 100 residues long: uncharacterized protein (100 aa).

An N-terminal signal peptide occupies residues Met-1–Thr-18. The interval Leu-48 to Ala-86 is disordered. Residues Gln-58–Lys-69 show a composition bias toward polar residues. N-linked (GlcNAc...) asparagine glycosylation is present at Asn-64.

It is found in the secreted. This is an uncharacterized protein from Homo sapiens (Human).